We begin with the raw amino-acid sequence, 350 residues long: GTPase Obg (350 aa).

In terms of domain architecture, Obg spans 1-159 (MKFIDEAKIT…WELALELKVL (159 aa)). The interval 17-43 (GDGSASFRREKYIPKGGPDGGDGGRGG) is disordered. The span at 33-43 (GPDGGDGGRGG) shows a compositional bias: gly residues. The OBG-type G domain maps to 160–334 (ADVGLLGMPN…LTYAVMDYLG (175 aa)). GTP-binding positions include 166–173 (GMPNAGKS), 191–195 (FTTLA), 213–216 (DIPG), 284–287 (NKLD), and 315–317 (SAL). Positions 173 and 193 each coordinate Mg(2+).

Belongs to the TRAFAC class OBG-HflX-like GTPase superfamily. OBG GTPase family. Monomer. Mg(2+) serves as cofactor.

It is found in the cytoplasm. Its function is as follows. An essential GTPase which binds GTP, GDP and possibly (p)ppGpp with moderate affinity, with high nucleotide exchange rates and a fairly low GTP hydrolysis rate. Plays a role in control of the cell cycle, stress response, ribosome biogenesis and in those bacteria that undergo differentiation, in morphogenesis control. The sequence is that of GTPase Obg from Thiobacillus denitrificans (strain ATCC 25259 / T1).